The chain runs to 432 residues: Trigger factor (432 aa).

Positions 161 to 246 (EDRVTIDFTG…LKKVEERELP (86 aa)) constitute a PPIase FKBP-type domain.

This sequence belongs to the FKBP-type PPIase family. Tig subfamily.

It is found in the cytoplasm. The catalysed reaction is [protein]-peptidylproline (omega=180) = [protein]-peptidylproline (omega=0). In terms of biological role, involved in protein export. Acts as a chaperone by maintaining the newly synthesized protein in an open conformation. Functions as a peptidyl-prolyl cis-trans isomerase. The chain is Trigger factor from Salmonella schwarzengrund (strain CVM19633).